The following is a 1447-amino-acid chain: Baculoviral IAP repeat-containing protein 1b (1447 aa).

BIR repeat units lie at residues 60 to 127 (EAKR…CEFL), 159 to 227 (EEAR…CEFL), and 278 to 345 (EELR…CVFL). Zn(2+) is bound by residues Cys-315, Cys-318, His-335, and Cys-342. The NACHT domain maps to 508-802 (SVMCVEGEAG…EFLAAVRLTE (295 aa)). An ATP-binding site is contributed by Lys-520.

As to quaternary structure, component of the NLRC4 inflammasome, at least composed of NLRC4, caspase-1 (CASP1) and some NAIP protein. Interacts with S.typhimurium (Salmonella) PrgJ and B.thailandensis BsaK.

Its function is as follows. Sensor component of the NLRC4 inflammasome that specifically recognizes and binds type III secretion system (T3SS) rod proteins such as S.typhimurium (Salmonella) PrgJ and B.thailandensis BsaK from pathogenic bacteria. Association of pathogenic bacteria proteins drives in turn drive assembly and activation of the NLRC4 inflammasome, promoting caspase-1 activation, cytokine production and macrophage pyroptosis. The NLRC4 inflammasome is activated as part of the innate immune response to a range of intracellular bacteria. The NLRC4 inflammasome senses Gram-negative bacteria such as L.pneumophila and P.aeruginosa, enteric pathogens S.typhimurium (Salmonella) and S.flexneri. Prevents motor-neuron apoptosis induced by a variety of signals. The chain is Baculoviral IAP repeat-containing protein 1b (Naip2) from Mus musculus (Mouse).